The following is a 641-amino-acid chain: FACT complex subunit SSRP1-A (641 aa).

Residues 459 to 561 (TDDDAVDPHL…DPNAPKRAMT (103 aa)) are disordered. Residues 476 to 487 (GDEESDEEDEDF) are compositionally biased toward acidic residues. Over residues 512–524 (GGEKEKLSKKEAS) the composition is skewed to basic and acidic residues. Residues 556-624 (PKRAMTPFMY…RYEKESAVYR (69 aa)) constitute a DNA-binding region (HMG box).

It belongs to the SSRP1 family. In terms of assembly, component of the FACT complex, a stable heterodimer of SPT16 and SSRP1.

The protein localises to the nucleus. It is found in the chromosome. In terms of biological role, component of the FACT complex, a general chromatin factor that acts to reorganize nucleosomes. The FACT complex is involved in multiple processes that require DNA as a template such as mRNA elongation, DNA replication and DNA repair. During transcription elongation the FACT complex acts as a histone chaperone that both destabilizes and restores nucleosomal structure. It facilitates the passage of RNA polymerase II and transcription by promoting the dissociation of one histone H2A-H2B dimer from the nucleosome, then subsequently promotes the reestablishment of the nucleosome following the passage of RNA polymerase II. Binds specifically to double-stranded DNA. The sequence is that of FACT complex subunit SSRP1-A (SSRP1-A) from Oryza sativa subsp. japonica (Rice).